A 262-amino-acid polypeptide reads, in one-letter code: Acyl-[acyl-carrier-protein]--UDP-N-acetylglucosamine O-acyltransferase (262 aa).

Belongs to the transferase hexapeptide repeat family. LpxA subfamily. Homotrimer.

The protein localises to the cytoplasm. It catalyses the reaction a (3R)-hydroxyacyl-[ACP] + UDP-N-acetyl-alpha-D-glucosamine = a UDP-3-O-[(3R)-3-hydroxyacyl]-N-acetyl-alpha-D-glucosamine + holo-[ACP]. It functions in the pathway glycolipid biosynthesis; lipid IV(A) biosynthesis; lipid IV(A) from (3R)-3-hydroxytetradecanoyl-[acyl-carrier-protein] and UDP-N-acetyl-alpha-D-glucosamine: step 1/6. Involved in the biosynthesis of lipid A, a phosphorylated glycolipid that anchors the lipopolysaccharide to the outer membrane of the cell. This chain is Acyl-[acyl-carrier-protein]--UDP-N-acetylglucosamine O-acyltransferase, found in Vibrio parahaemolyticus serotype O3:K6 (strain RIMD 2210633).